A 429-amino-acid chain; its full sequence is Cytochrome c biogenesis protein CcsB (429 aa).

3 helical membrane passes run 14-34 (LKVA…GTAL), 72-92 (SFWF…CSWK), and 162-182 (VGPP…TYGV).

The protein belongs to the Ccs1/CcsB family. May interact with CcsA.

The protein resides in the cellular thylakoid membrane. Required during biogenesis of c-type cytochromes (cytochrome c6 and cytochrome f) at the step of heme attachment. The protein is Cytochrome c biogenesis protein CcsB of Prochlorococcus marinus (strain SARG / CCMP1375 / SS120).